A 747-amino-acid chain; its full sequence is MANTRVDHLLNTLEELLPYELEKFKFKLHTTSLEKGHSRIPLSLVKMARPIKLTRLLLTYYGEEYAVRLTLQILRATNQRQLAEELHKATGPEHLTEENGVGGSVQSSAENKDKGVKGSDVPGEDEAQQNDDESDILPPIQAEVGKGPQKKSLAKRKDQRGPESLDSQTKPGARSAAPLYRRTLVTQSPGDKENRAGAQPQECQLCREAARSTAMSQGGERSRRLKCICLQERSDPGVLKLPLTQKKENPQIQKLFRLKRKQEMAVSFVREATLNGRTTGTLEKGVGIPEHSMMLDEETSRNMSSKISLTREKRCTASWTENGNGGPETPETLGETVSSILCDSCSPKVLLSLGEKLAQTPEDPASLGQAASKGRSRDKVACPLCHTQGELPAKACVQSSCSCSVAPGDPKASGRHSICFQCQSSRAGKSCEAQSPQFLPQCPRHMKQVQLLFCEDHREPICLICRLSQEHQGHRVRPIEEAALQYKEQIRKQLERLREMRGYVEEHKLPADKKAEDFLKQTETQKQRISCPLEKLFQFLEQQEQLFVTWLQELVQTIGKVRETYYTQVSLLDKLIGELEAKQDQPEWELMQDIGATLHRAETMTASELLGIPPGVKEKLHLLYQKSKSAEKNMQRFSEMLGSEMAFSASDVATREGCRPSTTKAQALIPTVHLKCDGAHTQDFDVILCAELEAGGSEPQDYLHPSSAQDTPELHEIHSQNNKRKFKSFLKWKPSFSRTDRCLRTCW.

One can recognise a Pyrin domain in the interval 1–92; it reads MANTRVDHLL…AEELHKATGP (92 aa). Residues 89-181 are disordered; sequence ATGPEHLTEE…GARSAAPLYR (93 aa). A compositionally biased stretch (acidic residues) spans 122–135; that stretch reads PGEDEAQQNDDESD. Zn(2+)-binding residues include Cys442, His445, Cys465, and His471. Residues 442–479 form a B box-type zinc finger; that stretch reads CPRHMKQVQLLFCEDHREPICLICRLSQEHQGHRVRPI. The stretch at 479–508 forms a coiled coil; sequence IEEAALQYKEQIRKQLERLREMRGYVEEHK. A required for homotrimerization and induction of pyroptosomes region spans residues 487-645; the sequence is KEQIRKQLER…RFSEMLGSEM (159 aa). The disordered stretch occupies residues 698–720; it reads EPQDYLHPSSAQDTPELHEIHSQ.

As to quaternary structure, homotrimer. Interacts (via the B box-type zinc finger) with PSTPIP1. Interacts (via the B30.2/SPRY domain) with several components of the inflammasome complex, including CASP1 p20 and p10 subunits, CASP5, PYCARD, NLRP1, NLRP2 and NLRP3, as well as with unprocessed IL1B; this interaction may lead to autophagic degradation of these proteins. Component of the AIM2 PANoptosome complex, a multiprotein complex that drives inflammatory cell death (PANoptosis). Interacts with NFKBIA and RELA. Interacts weakly with VASP and ACTR3. Interacts with active ULK1 (phosphorylated on 'Ser-317') and BECN1 simultaneously. Also interacts with ATG16L1 (via WD repeats), and with ATG8 family members, including GABARAP, GABARAPL1 and, to a lesser extent, GABARAPL2, MAP1LC3A/LC3A and MAP1LC3C/LC3C. Interacts with TRIM21. Interacts with YWHAB, YWHAE, YWHAG, YWHAH, YWHAQ and YWHAZ; the interaction is required for the down-regulation of pyrin pro-inflammatory activity. Post-translationally, degraded along with the delivery of its substrates to autolysosomal compartments (at protein level). Expressed in spleen and, to a lesser degree in the lung. Not expressed in thymus, testis, ovary, heart, brain, liver, kidney and muscle.

The protein resides in the cytoplasm. The protein localises to the cytoskeleton. Its subcellular location is the cell projection. It localises to the ruffle. It is found in the lamellipodium. The protein resides in the cytoplasmic vesicle. The protein localises to the autophagosome. Its subcellular location is the nucleus. Functionally, involved in the regulation of innate immunity and the inflammatory response in response to IFNG/IFN-gamma. Organizes autophagic machinery by serving as a platform for the assembly of ULK1, Beclin 1/BECN1, ATG16L1, and ATG8 family members and recognizes specific autophagy targets, thus coordinating target recognition with assembly of the autophagic apparatus and initiation of autophagy. Acts as an autophagy receptor for the degradation of several inflammasome components, including CASP1, NLRP1 and NLRP3, hence preventing excessive IL1B- and IL18-mediated inflammation. However, it can also have a positive effect in the inflammatory pathway, acting as an innate immune sensor that triggers PYCARD/ASC specks formation, caspase-1 activation, and IL1B and IL18 production. Together with AIM2, also acts as a mediator of pyroptosis, necroptosis and apoptosis (PANoptosis), an integral part of host defense against pathogens, in response to bacterial infection. It is required for PSTPIP1-induced PYCARD/ASC oligomerization and inflammasome formation. Recruits PSTPIP1 to inflammasomes, and is required for PSTPIP1 oligomerization. The sequence is that of Pyrin from Rattus norvegicus (Rat).